A 364-amino-acid chain; its full sequence is Small ribosomal subunit biogenesis GTPase RsgA (364 aa).

A CP-type G domain is found at 101–264 (KGLVEKPGVP…VIDTPGLREL (164 aa)). GTP contacts are provided by residues 154–157 (NKSD) and 206–214 (GSSGAGKST). Zn(2+)-binding residues include Cys288, Cys293, His295, and Cys301. The interval 339–364 (QVAQKRKRKTIPRQGKRWRREHGDGQ) is disordered. Residues 342–358 (QKRKRKTIPRQGKRWRR) show a composition bias toward basic residues.

The protein belongs to the TRAFAC class YlqF/YawG GTPase family. RsgA subfamily. Monomer. Associates with 30S ribosomal subunit, binds 16S rRNA. Zn(2+) is required as a cofactor.

The protein resides in the cytoplasm. One of several proteins that assist in the late maturation steps of the functional core of the 30S ribosomal subunit. Helps release RbfA from mature subunits. May play a role in the assembly of ribosomal proteins into the subunit. Circularly permuted GTPase that catalyzes slow GTP hydrolysis, GTPase activity is stimulated by the 30S ribosomal subunit. The polypeptide is Small ribosomal subunit biogenesis GTPase RsgA (Syntrophotalea carbinolica (strain DSM 2380 / NBRC 103641 / GraBd1) (Pelobacter carbinolicus)).